A 184-amino-acid polypeptide reads, in one-letter code: Outer-membrane lipoprotein carrier protein (184 aa).

An N-terminal signal peptide occupies residues 1–19 (MRAFLKILMVLIFMSVAYA).

Belongs to the LolA family. In terms of assembly, monomer.

It is found in the periplasm. In terms of biological role, participates in the translocation of lipoproteins from the inner membrane to the outer membrane. Only forms a complex with a lipoprotein if the residue after the N-terminal Cys is not an aspartate (The Asp acts as a targeting signal to indicate that the lipoprotein should stay in the inner membrane). This is Outer-membrane lipoprotein carrier protein from Helicobacter pylori (strain HPAG1).